Consider the following 428-residue polypeptide: Anaerobic glycerol-3-phosphate dehydrogenase subunit B (428 aa).

The protein belongs to the anaerobic G-3-P dehydrogenase subunit B family. Composed of a catalytic GlpA/B dimer and of membrane bound GlpC. FMN is required as a cofactor.

It carries out the reaction a quinone + sn-glycerol 3-phosphate = dihydroxyacetone phosphate + a quinol. It participates in polyol metabolism; glycerol degradation via glycerol kinase pathway; glycerone phosphate from sn-glycerol 3-phosphate (anaerobic route): step 1/1. Conversion of glycerol 3-phosphate to dihydroxyacetone. Uses fumarate or nitrate as electron acceptor. In Pasteurella multocida (strain Pm70), this protein is Anaerobic glycerol-3-phosphate dehydrogenase subunit B.